The chain runs to 116 residues: Large ribosomal subunit protein bL19 (116 aa).

It belongs to the bacterial ribosomal protein bL19 family.

Functionally, this protein is located at the 30S-50S ribosomal subunit interface and may play a role in the structure and function of the aminoacyl-tRNA binding site. The polypeptide is Large ribosomal subunit protein bL19 (Chloroflexus aggregans (strain MD-66 / DSM 9485)).